A 427-amino-acid polypeptide reads, in one-letter code: Ribitol transporter (427 aa).

Residues 1-7 lie on the Cytoplasmic side of the membrane; that stretch reads MSVNNKQ. The chain crosses the membrane as a helical span at residues 8 to 28; sequence WYGLPLNLIWGYVAIAVFMTG. Over 29–51 the chain is Extracellular; it reads DGFELAFLSHYIKALGFTPAQAS. Residues 52-72 form a helical membrane-spanning segment; it reads FAFTLYGLAAALSAWVSGVVA. The Cytoplasmic segment spans residues 73–79; sequence EIITPRK. Residues 80 to 100 traverse the membrane as a helical segment; sequence AMLIGFVLWCVFHVLFLVFGL. Residues 101-107 are Extracellular-facing; it reads GRANYAL. Residues 108-128 traverse the membrane as a helical segment; that stretch reads ILLFYGIRGLAYPLFLYSFIV. Residues 129–141 are Cytoplasmic-facing; it reads AIIHNVRSDSSSS. A helical membrane pass occupies residues 142–162; that stretch reads ALGWFWAVYSVGIGVFGSYIP. Residues 163–171 are Extracellular-facing; sequence SFTIPHIGE. The helical transmembrane segment at 172 to 192 threads the bilayer; the sequence is MGTLWLALLFCATGGIIALVS. Over 193-238 the chain is Cytoplasmic; it reads MRHTETPRHMQNLTTREKFAELGRAATLLYTNRSILFSSIVRIINT. A helical membrane pass occupies residues 239-259; the sequence is LSLFGFAVIMPMMFVDELGFT. Residues 260–263 are Extracellular-facing; it reads TSEW. Residues 264-284 form a helical membrane-spanning segment; that stretch reads LQVWAAFFFTTIFSNVFWGIV. Over 285–295 the chain is Cytoplasmic; the sequence is AEKMGWMKVIR. A helical transmembrane segment spans residues 296-316; it reads WFGCIGMALSSLAFYYLPQHF. The Extracellular segment spans residues 317 to 323; that stretch reads GHNFAMA. The helical transmembrane segment at 324–344 threads the bilayer; sequence LVPAIALGIFVAAFVPMAAVF. Over 345 to 360 the chain is Cytoplasmic; that stretch reads PALEPNHKGAAISVYN. Residues 361–381 traverse the membrane as a helical segment; sequence LSAGLSNFLAPAIAVVLLPYF. The Extracellular segment spans residues 382-383; the sequence is ST. Residues 384 to 404 traverse the membrane as a helical segment; sequence IGVVIAYTALYILAFFLCPLI. Topologically, residues 405–427 are cytoplasmic; it reads RVEQPGFTSDQHAKPFTANAAES.

Belongs to the major facilitator superfamily. Sugar transporter (TC 2.A.1.1) family. CsbX subfamily.

It localises to the cell membrane. The protein is Ribitol transporter (rbtT) of Klebsiella pneumoniae.